A 106-amino-acid chain; its full sequence is UPF0060 membrane protein CHU_3331 (106 aa).

The next 4 membrane-spanning stretches (helical) occupy residues 5 to 25 (FYFILAAFCEISGCYLFWLHF), 31 to 51 (ALLLLPAAACLLVFAYLLTKI), 59 to 79 (AYAVYGGIYIVCSLAWMYGIE), and 85 to 105 (IWDYIGVGICLIGASVILFAP).

This sequence belongs to the UPF0060 family.

It localises to the cell inner membrane. This is UPF0060 membrane protein CHU_3331 from Cytophaga hutchinsonii (strain ATCC 33406 / DSM 1761 / CIP 103989 / NBRC 15051 / NCIMB 9469 / D465).